Reading from the N-terminus, the 571-residue chain is L-erythrulose 1-kinase (571 aa).

The 325-residue stretch at 7-331 (SPDDFADEAV…WTAPVETPAY (325 aa)) folds into the DhaK domain. Histidine 217 (tele-hemiaminal-histidine intermediate) is an active-site residue. A DhaL domain is found at 367-567 (RNIVAVLETF…FAMLMKALGE (201 aa)). ATP-binding positions include 396–402 (DGDHGQG), 442–443 (TS), glycine 484, arginine 539, and 552–554 (DPG).

It catalyses the reaction L-erythrulose + ATP = L-erythrulose 1-phosphate + ADP + H(+). It participates in carbohydrate metabolism; L-threitol degradation. Its function is as follows. Kinase that has a preference for L-erythrulose, producing L-erythrulose-1P. Involved in the degradation pathway of L-threitol, that allows M.smegmatis to grow on this compound as the sole carbon source. Is also able to phosphorylate D-erythrulose and dihydroxyacetone in vitro. The polypeptide is L-erythrulose 1-kinase (Mycolicibacterium smegmatis (strain ATCC 700084 / mc(2)155) (Mycobacterium smegmatis)).